A 95-amino-acid chain; its full sequence is Aspartyl/glutamyl-tRNA(Asn/Gln) amidotransferase subunit C (95 aa).

The protein belongs to the GatC family. In terms of assembly, heterotrimer of A, B and C subunits.

The enzyme catalyses L-glutamyl-tRNA(Gln) + L-glutamine + ATP + H2O = L-glutaminyl-tRNA(Gln) + L-glutamate + ADP + phosphate + H(+). It catalyses the reaction L-aspartyl-tRNA(Asn) + L-glutamine + ATP + H2O = L-asparaginyl-tRNA(Asn) + L-glutamate + ADP + phosphate + 2 H(+). Allows the formation of correctly charged Asn-tRNA(Asn) or Gln-tRNA(Gln) through the transamidation of misacylated Asp-tRNA(Asn) or Glu-tRNA(Gln) in organisms which lack either or both of asparaginyl-tRNA or glutaminyl-tRNA synthetases. The reaction takes place in the presence of glutamine and ATP through an activated phospho-Asp-tRNA(Asn) or phospho-Glu-tRNA(Gln). This chain is Aspartyl/glutamyl-tRNA(Asn/Gln) amidotransferase subunit C, found in Geobacter sp. (strain M21).